The sequence spans 538 residues: Calcium-dependent protein kinase 3 (538 aa).

The tract at residues 23-70 (PKKSIERIKKKKDSNKSIKSQHKFEGSKISNKNNELKDVKSKDPKNYE) is disordered. The segment covering 56-68 (NELKDVKSKDPKN) has biased composition (basic and acidic residues). The Protein kinase domain occupies 112–367 (NLSEEPLGKG…ASEALKHPWF (256 aa)). ATP-binding positions include 118–126 (LGKGTYGCV) and lysine 141. The active-site Proton acceptor is the aspartate 232. The J domain autoinhibitory motif motif lies at 387–395 (NFKNYALLL). Residues 387–422 (NFKNYALLLKLQKLAMTIIAQQSNDYDLQQLKAVFL) form a j domain region. Residues 396-405 (KLQKLAMTII) carry the J domain EF-hand interaction motif motif. EF-hand domains are found at residues 412–447 (YDLQ…SGLK), 450–481 (QNFD…DRKH), and 482–517 (LSKK…VILF). Residues aspartate 460, aspartate 462, serine 464, arginine 466, glutamate 471, aspartate 495, aspartate 497, aspartate 499, glutamate 501, and glutamate 506 each contribute to the Ca(2+) site.

The protein belongs to the protein kinase superfamily. Ser/Thr protein kinase family. CDPK subfamily. Mg(2+) serves as cofactor.

The protein localises to the cytoplasm. The catalysed reaction is L-seryl-[protein] + ATP = O-phospho-L-seryl-[protein] + ADP + H(+). It catalyses the reaction L-threonyl-[protein] + ATP = O-phospho-L-threonyl-[protein] + ADP + H(+). Its activity is regulated as follows. Activated by calcium. Upon calcium binding to the EF-hand domain 2, the C-terminus of the junction domain (J domain) undergoes a conformational change which results in the dissociation of the pseudo-substrate inhibitory motif from the catalytic domain. This, in turn, may facilitate the autophosphorylation of the activation loop at Thr-273, which leads to the kinase activation. Functionally, calcium-dependent protein kinase which acts as a sensor and effector of intracellular Ca(2+) levels probably in part downstream of cGMP-activated PKG kinase. In the mosquito midgut, regulates the gliding motility of the ookinete which is essential for the ookinete to invade the midgut epithelium. However, another study showed that while required for ookinete invasion of the midgut epithelium, is not required for ookinete gliding motility. The protein is Calcium-dependent protein kinase 3 of Plasmodium yoelii yoelii.